A 242-amino-acid chain; its full sequence is Phosphate import ATP-binding protein PstB 1 (242 aa).

One can recognise an ABC transporter domain in the interval 1 to 237 (MDLYYGSYRA…PKDQRTEDYI (237 aa)). Position 28–35 (28–35 (GPSGCGKS)) interacts with ATP.

Belongs to the ABC transporter superfamily. Phosphate importer (TC 3.A.1.7) family. In terms of assembly, the complex is composed of two ATP-binding proteins (PstB), two transmembrane proteins (PstC and PstA) and a solute-binding protein (PstS).

It localises to the cell membrane. The enzyme catalyses phosphate(out) + ATP + H2O = ADP + 2 phosphate(in) + H(+). Its function is as follows. Part of the ABC transporter complex PstSACB involved in phosphate import. Responsible for energy coupling to the transport system. This chain is Phosphate import ATP-binding protein PstB 1, found in Symbiobacterium thermophilum (strain DSM 24528 / JCM 14929 / IAM 14863 / T).